The primary structure comprises 316 residues: tRNA methyltransferase 10 homolog B (316 aa).

Residues 73–97 adopt a coiled-coil conformation; it reads EKIVAAKKSKRKQEKERRKANRAEN. A disordered region spans residues 77–98; it reads AAKKSKRKQEKERRKANRAENP. The region spanning 113 to 310 is the SAM-dependent MTase TRM10-type domain; that stretch reads TKDKLLEAKH…KGVSSGKGYI (198 aa).

Belongs to the class IV-like SAM-binding methyltransferase superfamily. TRM10 family.

The enzyme catalyses guanosine(9) in tRNA + S-adenosyl-L-methionine = N(1)-methylguanosine(9) in tRNA + S-adenosyl-L-homocysteine + H(+). Its function is as follows. S-adenosyl-L-methionine-dependent guanine N(1)-methyltransferase that catalyzes the formation of N(1)-methylguanine at position 9 (m1G9) in tRNAs. Probably not able to catalyze formation of N(1)-methyladenine at position 9 (m1A9) in tRNAs. This Homo sapiens (Human) protein is tRNA methyltransferase 10 homolog B (TRMT10B).